Consider the following 158-residue polypeptide: UPF0225 protein Pfl01_1218 (158 aa).

This sequence belongs to the UPF0225 family.

The polypeptide is UPF0225 protein Pfl01_1218 (Pseudomonas fluorescens (strain Pf0-1)).